Consider the following 187-residue polypeptide: Elongation factor P (187 aa).

The protein belongs to the elongation factor P family.

The protein resides in the cytoplasm. Its pathway is protein biosynthesis; polypeptide chain elongation. Its function is as follows. Involved in peptide bond synthesis. Stimulates efficient translation and peptide-bond synthesis on native or reconstituted 70S ribosomes in vitro. Probably functions indirectly by altering the affinity of the ribosome for aminoacyl-tRNA, thus increasing their reactivity as acceptors for peptidyl transferase. This chain is Elongation factor P (efp), found in Helicobacter pylori (strain J99 / ATCC 700824) (Campylobacter pylori J99).